The sequence spans 112 residues: Large ribosomal subunit protein uL22 (112 aa).

The protein belongs to the universal ribosomal protein uL22 family. Part of the 50S ribosomal subunit.

In terms of biological role, this protein binds specifically to 23S rRNA; its binding is stimulated by other ribosomal proteins, e.g. L4, L17, and L20. It is important during the early stages of 50S assembly. It makes multiple contacts with different domains of the 23S rRNA in the assembled 50S subunit and ribosome. Functionally, the globular domain of the protein is located near the polypeptide exit tunnel on the outside of the subunit, while an extended beta-hairpin is found that lines the wall of the exit tunnel in the center of the 70S ribosome. In Lawsonia intracellularis (strain PHE/MN1-00), this protein is Large ribosomal subunit protein uL22.